A 293-amino-acid chain; its full sequence is Ribosomal RNA small subunit methyltransferase A (293 aa).

Residues N33, V35, G60, E81, D111, and N130 each coordinate S-adenosyl-L-methionine.

It belongs to the class I-like SAM-binding methyltransferase superfamily. rRNA adenine N(6)-methyltransferase family. RsmA subfamily.

The protein resides in the cytoplasm. It catalyses the reaction adenosine(1518)/adenosine(1519) in 16S rRNA + 4 S-adenosyl-L-methionine = N(6)-dimethyladenosine(1518)/N(6)-dimethyladenosine(1519) in 16S rRNA + 4 S-adenosyl-L-homocysteine + 4 H(+). Specifically dimethylates two adjacent adenosines (A1518 and A1519) in the loop of a conserved hairpin near the 3'-end of 16S rRNA in the 30S particle. May play a critical role in biogenesis of 30S subunits. The protein is Ribosomal RNA small subunit methyltransferase A of Corynebacterium glutamicum (strain ATCC 13032 / DSM 20300 / JCM 1318 / BCRC 11384 / CCUG 27702 / LMG 3730 / NBRC 12168 / NCIMB 10025 / NRRL B-2784 / 534).